The chain runs to 234 residues: 2,3-bisphosphoglycerate-dependent phosphoglycerate mutase (234 aa).

Substrate-binding positions include 8–15 (RHGESVWN), 21–22 (TG), Arg-60, 87–90 (ERHY), Lys-98, 114–115 (RR), and 183–184 (GN). His-9 serves as the catalytic Tele-phosphohistidine intermediate. Catalysis depends on Glu-87, which acts as the Proton donor/acceptor.

It belongs to the phosphoglycerate mutase family. BPG-dependent PGAM subfamily. In terms of assembly, homodimer.

The enzyme catalyses (2R)-2-phosphoglycerate = (2R)-3-phosphoglycerate. Its pathway is carbohydrate degradation; glycolysis; pyruvate from D-glyceraldehyde 3-phosphate: step 3/5. Its function is as follows. Catalyzes the interconversion of 2-phosphoglycerate and 3-phosphoglycerate. The protein is 2,3-bisphosphoglycerate-dependent phosphoglycerate mutase of Citrifermentans bemidjiense (strain ATCC BAA-1014 / DSM 16622 / JCM 12645 / Bem) (Geobacter bemidjiensis).